The primary structure comprises 307 residues: Dihydroorotate dehydrogenase B (NAD(+)), catalytic subunit (307 aa).

FMN-binding positions include Ser22 and 46–47; that span reads KT. Substrate contacts are provided by residues Lys46, 70–74, and Asn128; that span reads NAVGL. Asn128 contributes to the FMN binding site. Cys131 acts as the Nucleophile in catalysis. FMN-binding residues include Lys166 and Ile192. 193-194 is a substrate binding site; it reads NT. FMN-binding positions include Gly218, 244 to 245, and 266 to 267; these read GG and GT.

The protein belongs to the dihydroorotate dehydrogenase family. Type 1 subfamily. Heterotetramer of 2 PyrK and 2 PyrD type B subunits. The cofactor is FMN.

The protein localises to the cytoplasm. The catalysed reaction is (S)-dihydroorotate + NAD(+) = orotate + NADH + H(+). It functions in the pathway pyrimidine metabolism; UMP biosynthesis via de novo pathway; orotate from (S)-dihydroorotate (NAD(+) route): step 1/1. Catalyzes the conversion of dihydroorotate to orotate with NAD(+) as electron acceptor. The chain is Dihydroorotate dehydrogenase B (NAD(+)), catalytic subunit (pyrD) from Desulforudis audaxviator (strain MP104C).